A 124-amino-acid chain; its full sequence is Small ribosomal subunit protein uS13 (124 aa).

The segment at 94 to 124 (RGLPVRGQRTKTNARTRKGPKRTIAGKKKAR) is disordered.

The protein belongs to the universal ribosomal protein uS13 family. In terms of assembly, part of the 30S ribosomal subunit. Forms a loose heterodimer with protein S19. Forms two bridges to the 50S subunit in the 70S ribosome.

In terms of biological role, located at the top of the head of the 30S subunit, it contacts several helices of the 16S rRNA. In the 70S ribosome it contacts the 23S rRNA (bridge B1a) and protein L5 of the 50S subunit (bridge B1b), connecting the 2 subunits; these bridges are implicated in subunit movement. Contacts the tRNAs in the A and P-sites. The polypeptide is Small ribosomal subunit protein uS13 (Mycolicibacterium vanbaalenii (strain DSM 7251 / JCM 13017 / BCRC 16820 / KCTC 9966 / NRRL B-24157 / PYR-1) (Mycobacterium vanbaalenii)).